Here is a 491-residue protein sequence, read N- to C-terminus: Glutamyl-tRNA(Gln) amidotransferase subunit A (491 aa).

Residues K80 and S155 each act as charge relay system in the active site. S179 serves as the catalytic Acyl-ester intermediate.

The protein belongs to the amidase family. GatA subfamily. As to quaternary structure, heterotrimer of A, B and C subunits.

The enzyme catalyses L-glutamyl-tRNA(Gln) + L-glutamine + ATP + H2O = L-glutaminyl-tRNA(Gln) + L-glutamate + ADP + phosphate + H(+). Allows the formation of correctly charged Gln-tRNA(Gln) through the transamidation of misacylated Glu-tRNA(Gln) in organisms which lack glutaminyl-tRNA synthetase. The reaction takes place in the presence of glutamine and ATP through an activated gamma-phospho-Glu-tRNA(Gln). The polypeptide is Glutamyl-tRNA(Gln) amidotransferase subunit A (Salinispora arenicola (strain CNS-205)).